The primary structure comprises 336 residues: Biotin synthase (336 aa).

The 234-residue stretch at 55 to 288 folds into the Radical SAM core domain; that stretch reads GEAASLHACS…RTIIKFAAGR (234 aa). Residues cysteine 73, cysteine 77, and cysteine 80 each coordinate [4Fe-4S] cluster. Residues cysteine 152, cysteine 213, and lysine 283 each coordinate [2Fe-2S] cluster.

The protein belongs to the radical SAM superfamily. Biotin synthase family. In terms of assembly, homodimer. Requires [4Fe-4S] cluster as cofactor. It depends on [2Fe-2S] cluster as a cofactor.

The catalysed reaction is (4R,5S)-dethiobiotin + (sulfur carrier)-SH + 2 reduced [2Fe-2S]-[ferredoxin] + 2 S-adenosyl-L-methionine = (sulfur carrier)-H + biotin + 2 5'-deoxyadenosine + 2 L-methionine + 2 oxidized [2Fe-2S]-[ferredoxin]. It participates in cofactor biosynthesis; biotin biosynthesis; biotin from 7,8-diaminononanoate: step 2/2. Its function is as follows. Catalyzes the conversion of dethiobiotin (DTB) to biotin by the insertion of a sulfur atom into dethiobiotin via a radical-based mechanism. The chain is Biotin synthase from Chlorobium limicola (strain DSM 245 / NBRC 103803 / 6330).